Reading from the N-terminus, the 629-residue chain is Extracellular metalloproteinase 10 (629 aa).

Positions 1–19 (MHGLLLAAGLLSLPLYTIA) are cleaved as a signal peptide. Positions 20 to 240 (HTQPSGALSR…VHNVVDYVAH (221 aa)) are excised as a propeptide. 2 N-linked (GlcNAc...) asparagine glycosylation sites follow: asparagine 281 and asparagine 331. Zn(2+) is bound at residue histidine 424. Glutamate 425 is an active-site residue. Position 428 (histidine 428) interacts with Zn(2+). N-linked (GlcNAc...) asparagine glycans are attached at residues asparagine 469 and asparagine 617.

The protein belongs to the peptidase M36 family. Zn(2+) serves as cofactor.

It localises to the secreted. Secreted metalloproteinase that allows assimilation of proteinaceous substrates and probably acts as a virulence factor. The chain is Extracellular metalloproteinase 10 (MEP10) from Coccidioides posadasii (strain C735) (Valley fever fungus).